Here is a 451-residue protein sequence, read N- to C-terminus: Bifunctional protein GlmU (451 aa).

The tract at residues 1–232 is pyrophosphorylase; that stretch reads MTARSSLTIV…EDEVRGINTK (232 aa). Residues 11–14, K25, Q78, and 83–84 each bind UDP-N-acetyl-alpha-D-glucosamine; these read LAAG and GT. D108 lines the Mg(2+) pocket. Residues G144, E158, N173, and N230 each contribute to the UDP-N-acetyl-alpha-D-glucosamine site. Position 230 (N230) interacts with Mg(2+). Positions 233–253 are linker; that stretch reads AQLAEAESVMQARLRKAAMEA. Residues 254–451 form an N-acetyltransferase region; sequence GVTLIAPETV…MKTRGKKPEK (198 aa). 2 residues coordinate UDP-N-acetyl-alpha-D-glucosamine: R319 and K337. The active-site Proton acceptor is the H349. UDP-N-acetyl-alpha-D-glucosamine contacts are provided by Y352 and N363. Residues A366, 372-373, S409, and R426 contribute to the acetyl-CoA site; that span reads NY.

The protein in the N-terminal section; belongs to the N-acetylglucosamine-1-phosphate uridyltransferase family. This sequence in the C-terminal section; belongs to the transferase hexapeptide repeat family. In terms of assembly, homotrimer. Mg(2+) serves as cofactor.

It is found in the cytoplasm. The catalysed reaction is alpha-D-glucosamine 1-phosphate + acetyl-CoA = N-acetyl-alpha-D-glucosamine 1-phosphate + CoA + H(+). It carries out the reaction N-acetyl-alpha-D-glucosamine 1-phosphate + UTP + H(+) = UDP-N-acetyl-alpha-D-glucosamine + diphosphate. It participates in nucleotide-sugar biosynthesis; UDP-N-acetyl-alpha-D-glucosamine biosynthesis; N-acetyl-alpha-D-glucosamine 1-phosphate from alpha-D-glucosamine 6-phosphate (route II): step 2/2. Its pathway is nucleotide-sugar biosynthesis; UDP-N-acetyl-alpha-D-glucosamine biosynthesis; UDP-N-acetyl-alpha-D-glucosamine from N-acetyl-alpha-D-glucosamine 1-phosphate: step 1/1. It functions in the pathway bacterial outer membrane biogenesis; LPS lipid A biosynthesis. In terms of biological role, catalyzes the last two sequential reactions in the de novo biosynthetic pathway for UDP-N-acetylglucosamine (UDP-GlcNAc). The C-terminal domain catalyzes the transfer of acetyl group from acetyl coenzyme A to glucosamine-1-phosphate (GlcN-1-P) to produce N-acetylglucosamine-1-phosphate (GlcNAc-1-P), which is converted into UDP-GlcNAc by the transfer of uridine 5-monophosphate (from uridine 5-triphosphate), a reaction catalyzed by the N-terminal domain. This Bradyrhizobium diazoefficiens (strain JCM 10833 / BCRC 13528 / IAM 13628 / NBRC 14792 / USDA 110) protein is Bifunctional protein GlmU.